The primary structure comprises 307 residues: Probable aspartoacylase (307 aa).

2 residues coordinate Zn(2+): His-13 and Glu-16. Substrate-binding positions include Arg-55 and 62-63; that span reads NR. A Zn(2+)-binding site is contributed by His-105. Glu-163 and Tyr-276 together coordinate substrate.

It belongs to the AspA/AstE family. Aspartoacylase subfamily. It depends on Zn(2+) as a cofactor.

The catalysed reaction is an N-acyl-L-aspartate + H2O = a carboxylate + L-aspartate. In Prochlorococcus marinus (strain SARG / CCMP1375 / SS120), this protein is Probable aspartoacylase.